The chain runs to 259 residues: Putative deoxyribonuclease TATDN1 homolog (259 aa).

A divalent metal cation contacts are provided by Glu-82, His-116, His-138, and Asp-186.

This sequence belongs to the metallo-dependent hydrolases superfamily. TatD-type hydrolase family. It depends on a divalent metal cation as a cofactor.

It localises to the nucleus. Functionally, putative deoxyribonuclease. This is Putative deoxyribonuclease TATDN1 homolog from Vairimorpha ceranae (strain BRL01) (Microsporidian parasite).